Reading from the N-terminus, the 391-residue chain is Odorant receptor 67d (391 aa).

At Met-1–Val-45 the chain is on the cytoplasmic side. The helical transmembrane segment at Met-46–Ile-66 threads the bilayer. The Extracellular segment spans residues Asn-67–Thr-71. A helical membrane pass occupies residues Ile-72–Val-92. Residues Thr-93–Met-140 are Cytoplasmic-facing. A helical transmembrane segment spans residues Leu-141–Leu-161. The Extracellular portion of the chain corresponds to His-162–Lys-164. The chain crosses the membrane as a helical span at residues Val-165–Ile-185. At Leu-186–Val-191 the chain is on the cytoplasmic side. A helical transmembrane segment spans residues Ile-192–Val-212. The Extracellular portion of the chain corresponds to Thr-213–Ser-268. A helical transmembrane segment spans residues Ile-269–Ile-289. Over Phe-290–Ala-297 the chain is Cytoplasmic. A helical membrane pass occupies residues Pro-298 to Val-318. Residues Glu-319–Gly-391 are Extracellular-facing.

The protein belongs to the insect chemoreceptor superfamily. Heteromeric odorant receptor channel (TC 1.A.69) family. Or67d subfamily. As to quaternary structure, interacts with Orco. Complexes exist early in the endomembrane system in olfactory sensory neurons (OSNs), coupling these complexes to the conserved ciliary trafficking pathway. As to expression, expressed in antenna.

The protein localises to the cell membrane. Functionally, plays a role in detection and sensitivity to pheromones and signal transduction of the fatty-acid-derived male pheromone 11-cis vaccenyl acetate (cVA). Acts in concert with Snmp and lush to capture cVA molecules on the surface of Or67d expressing olfactory dendrites and facilitate their transfer to the odorant-receptor Orco complex. Necessary to mediate behavioral responses to cVA by regulating both male and female mating behavior. Activation of Or67d neurons by cVA inhibits courtship of other males, whereas in females their activation promotes receptivity to other males. May form a complex with Orco to form odorant-sensing units, providing sensitive and prolonged odorant signaling and calcium permeability. This chain is Odorant receptor 67d (Or67d), found in Drosophila melanogaster (Fruit fly).